Consider the following 191-residue polypeptide: Classical arabinogalactan protein 9 (191 aa).

A signal peptide spans 1–20 (MARSFAIAVICIVLIAGVTG). Residues 20-172 (GQAPTSPPTA…SPTDVNDQNG (153 aa)) form a disordered region. Gln-21 bears the Pyrrolidone carboxylic acid mark. 4-hydroxyproline is present on residues Pro-23, Pro-26, Pro-27, Pro-31, and Pro-33. Residues 24-146 (TSPPTATPAP…PSPSSSPPLP (123 aa)) show a composition bias toward pro residues. O-linked (Ara...) hydroxyproline glycans are attached at residues Pro-26, Pro-27, Pro-31, and Pro-33. The span at 155–172 (TDSISPAPSPTDVNDQNG) shows a compositional bias: polar residues. The GPI-anchor amidated glycine moiety is linked to residue Gly-172. Positions 173-191 (ASKMVSSLVFGSVLVWFMI) are cleaved as a propeptide — removed in mature form.

The protein belongs to the classical AGP family. In terms of processing, O-glycosylated on hydroxyprolines; noncontiguous hydroxylproline residues are glycosylated with arabinogalactan. In terms of tissue distribution, predominantly expressed in flowers and at a lower level in leaves and siliques.

It is found in the cell membrane. Proteoglycan that seems to be implicated in diverse developmental roles such as differentiation, cell-cell recognition, embryogenesis and programmed cell death. The chain is Classical arabinogalactan protein 9 (AGP9) from Arabidopsis thaliana (Mouse-ear cress).